The chain runs to 676 residues: Ion-translocating oxidoreductase complex subunit C (676 aa).

2 consecutive 4Fe-4S ferredoxin-type domains span residues Gly-369–Tyr-397 and Lys-407–Phe-436. 8 residues coordinate [4Fe-4S] cluster: Cys-377, Cys-380, Cys-383, Cys-387, Cys-416, Cys-419, Cys-422, and Cys-426. Residues Ala-600–Lys-652 are disordered. Over residues Gln-605–Gln-615 the composition is skewed to low complexity.

It belongs to the 4Fe4S bacterial-type ferredoxin family. RnfC subfamily. The complex is composed of six subunits: RsxA, RsxB, RsxC, RsxD, RsxE and RsxG. [4Fe-4S] cluster is required as a cofactor.

It localises to the cell inner membrane. Functionally, part of a membrane-bound complex that couples electron transfer with translocation of ions across the membrane. Required to maintain the reduced state of SoxR. The sequence is that of Ion-translocating oxidoreductase complex subunit C from Escherichia coli (strain SMS-3-5 / SECEC).